The following is a 178-amino-acid chain: Ribosomal RNA small subunit methyltransferase G (178 aa).

Residues G54, L59, 105-106 (LE), and R120 contribute to the S-adenosyl-L-methionine site.

It belongs to the methyltransferase superfamily. RNA methyltransferase RsmG family.

It is found in the cytoplasm. It catalyses the reaction guanosine(527) in 16S rRNA + S-adenosyl-L-methionine = N(7)-methylguanosine(527) in 16S rRNA + S-adenosyl-L-homocysteine. In terms of biological role, specifically methylates the N7 position of guanine in position 527 of 16S rRNA. This is Ribosomal RNA small subunit methyltransferase G from Helicobacter pylori (strain ATCC 700392 / 26695) (Campylobacter pylori).